Reading from the N-terminus, the 333-residue chain is Fe(3+)-citrate import system permease protein YfmE (333 aa).

8 consecutive transmembrane segments (helical) span residues 12–32, 65–85, 95–115, 120–140, 194–214, 238–258, 279–299, and 306–326; these read LLAI…SIGI, IILA…LQGV, VVGI…IFPE, VLPF…LMIA, EVKL…ILIP, FILI…VGSI, YLLP…DTLG, and VEIP…LYLL.

The protein belongs to the binding-protein-dependent transport system permease family. FecCD subfamily. As to quaternary structure, the complex is composed of one ATP-binding protein (YfmF), two transmembrane proteins (YfmD and YfmE) and a solute-binding protein (YfmC).

The protein resides in the cell membrane. Part of the ABC transporter complex YfmCDEF involved in citrate-dependent Fe(3+) import. Involved in the translocation of the substrate across the membrane. The sequence is that of Fe(3+)-citrate import system permease protein YfmE (yfmE) from Bacillus subtilis (strain 168).